A 647-amino-acid chain; its full sequence is Leucine-rich repeat and WD repeat-containing protein 1 (647 aa).

4 LRR repeats span residues 22–43 (KIRS…PKLL), 48–69 (QLQE…LGLS), 70–91 (HLRV…CQFP), and 92–113 (KLEE…LKVS). The tract at residues 204 to 267 (RTQVQKANSP…GSPVAGSDGS (64 aa)) is disordered. Phosphoserine occurs at positions 212, 243, 251, 259, and 264. WD repeat units lie at residues 282–335 (HSKN…LHKY), 341–379 (EFFS…LLHV), 383–422 (FCCG…LWDI), 426–472 (NQDY…CWDV), 484–526 (EVEF…LWSW), 542–582 (VVLA…LYDV), and 598–646 (APTQ…IWGR).

Belongs to the LRWD1 family. Integral component of the ORC complex. Directly interacts with CDT1, GMNN and ORC2. Interacts with ORC2 only when non-ubiquitinated; this interaction prevents LRWD1 ubiquitination and degradation. Some of these interactions are regulated in a cell-cycle dependent manner. Interaction with ORC1 occurs predominantly during G1. Association with phosphorylated ORC1 during mitosis is not efficient. Interaction with CDT1 occurs during G1 phase, as well as during mitosis with phosphorylated CDT1. Interaction with GMNN occurs from G1/S to mitosis. Interaction with ORC2 is observed throughout the cell cycle. The stoichiometry of the ORCA/ORC/CDT1/GMNN complex is 1:1:1:2. Interacts with CUL4A and DDB1; this interaction may lead to ubiquitination. In terms of processing, ubiquitinated; undergoes 'Lys-48'-linked polyubiquitination leading to proteasomal degradation. Ubiquitination occurs within the WD repeats at the end of the G1 phase. Ubiquitination may be catalyzed by the CUL4-DDB1 E3 ubiquitin-protein ligase complex and other E3 ligases. As to expression, testis-specific. Drastically down-regulated in testis from patients with Sertoli cell-only syndrome (SCOS).

Its subcellular location is the nucleus. It is found in the chromosome. The protein resides in the centromere. It localises to the telomere. The protein localises to the cytoplasm. Its subcellular location is the cytoskeleton. It is found in the microtubule organizing center. The protein resides in the centrosome. It localises to the kinetochore. Its function is as follows. Required for G1/S transition. Recruits and stabilizes the origin recognition complex (ORC) onto chromatin during G1 to establish pre-replication complex (preRC) and to heterochromatic sites in post-replicated cells. Binds a combination of DNA and histone methylation repressive marks on heterochromatin. Binds histone H3 and H4 trimethylation marks H3K9me3, H3K27me3 and H4K20me3 in a cooperative manner with DNA methylation. Required for silencing of major satellite repeats. May be important ORC2, ORC3 and ORC4 stability. The sequence is that of Leucine-rich repeat and WD repeat-containing protein 1 (LRWD1) from Homo sapiens (Human).